The sequence spans 347 residues: MSDNKREQRKNEHVEIAMAQGDATISDFDEIRFVHHSIPSVDVDDIDLTSQLKDFTLDQPLYINAMTGGSEWTKQINEKLAVIARETGIAMAVGSTHAALRNSKMASSFSIVRDTNPNGIIFSNVGADVPVDKAVESVKLLDAQALQVHVNAPQELVMPEGNRTFSTWMENLAQIVSRVDVPVIVKEVGFGMSKETIKSLNEIGVRYVDVSGRGGTNFVDIENERRTYKDMDYLGLWGQTTVESLLESASYQQDMDILASGGVRTPLDAVKCLALGASAVGMSRPFLNQVENYGITETLNYTEQFTDHMKKIMTMLDVKTIKDLKQTQMVFSPKLQSWIEQRGLDIR.

9–10 (RK) contributes to the substrate binding site. FMN contacts are provided by residues 65–67 (AMT), Ser-95, and Asn-124. 95–97 (STH) serves as a coordination point for substrate. Residue Gln-154 participates in substrate binding. Position 155 (Glu-155) interacts with Mg(2+). Residues Lys-186, Ser-211, Thr-216, 262 to 264 (GVR), and 283 to 284 (SR) contribute to the FMN site.

This sequence belongs to the IPP isomerase type 2 family. As to quaternary structure, homooctamer. Dimer of tetramers. FMN is required as a cofactor. The cofactor is NADPH. Mg(2+) serves as cofactor.

Its subcellular location is the cytoplasm. The enzyme catalyses isopentenyl diphosphate = dimethylallyl diphosphate. Its function is as follows. Involved in the biosynthesis of isoprenoids. Catalyzes the 1,3-allylic rearrangement of the homoallylic substrate isopentenyl (IPP) to its allylic isomer, dimethylallyl diphosphate (DMAPP). The chain is Isopentenyl-diphosphate delta-isomerase from Staphylococcus saprophyticus subsp. saprophyticus (strain ATCC 15305 / DSM 20229 / NCIMB 8711 / NCTC 7292 / S-41).